A 351-amino-acid polypeptide reads, in one-letter code: Modulator of apoptosis 1 (351 aa).

The LIR motif lies at 49-52 (YRLL). The tract at residues 120 to 127 (LTRALAHE) is BH3-like. The interval 202-205 (KRRR) is RASSF1-binding.

It belongs to the PNMA family. Homodimer. Under normal circumstances, held in an inactive conformation by an intramolecular interaction. Interacts with BAX. Binding to RASSF1 isoform A (RASSF1A) relieves this inhibitory interaction and allows further binding to BAX. Also binds to BCL2 and BCLX. Recruited to the TNFRSF1A and TNFRSF10A complexes in response to their respective cognate ligand, after internalization. Interacts with TRIM39. Interacts with RASSF6. Interacts with ATG8 proteins MAP1LC3A, MAP1LC3B and MAP1LC3C. Does not interact with ATG8 proteins GABARAPL1, GABARAPL2 and GABARAP. Interacts with SQSTM1; promoting dissociation of SQSTM1 inclusion bodies that sequester KEAP1. Ubiquitinated and degraded during mitotic exit by APC/C-Cdh1, this modification is inhibited by TRIM39.

The protein resides in the cytoplasm. The protein localises to the cytosol. Its subcellular location is the mitochondrion outer membrane. It localises to the extracellular vesicle membrane. Functionally, retrotransposon-derived protein that forms virion-like capsids. Acts as an effector of BAX during apoptosis: enriched at outer mitochondria membrane and associates with BAX upon induction of apoptosis, facilitating BAX-dependent mitochondrial outer membrane permeabilization and apoptosis. Required for death receptor-dependent apoptosis. When associated with RASSF1, promotes BAX conformational change and translocation to mitochondrial membranes in response to TNF and TNFSF10 stimulation. Also promotes autophagy: promotes phagophore closure via association with ATG8 proteins. Acts as an inhibitor of the NFE2L2/NRF2 pathway via interaction with SQSTM1: interaction promotes dissociation of SQSTM1 inclusion bodies that sequester KEAP1, relieving inactivation of the BCR(KEAP1) complex. The protein is Modulator of apoptosis 1 of Macaca fascicularis (Crab-eating macaque).